A 446-amino-acid chain; its full sequence is Exodeoxyribonuclease 7 large subunit (446 aa).

The protein belongs to the XseA family. As to quaternary structure, heterooligomer composed of large and small subunits.

The protein localises to the cytoplasm. The catalysed reaction is Exonucleolytic cleavage in either 5'- to 3'- or 3'- to 5'-direction to yield nucleoside 5'-phosphates.. Bidirectionally degrades single-stranded DNA into large acid-insoluble oligonucleotides, which are then degraded further into small acid-soluble oligonucleotides. This is Exodeoxyribonuclease 7 large subunit from Streptococcus pneumoniae (strain Taiwan19F-14).